Consider the following 665-residue polypeptide: Lamin-A (665 aa).

N-acetylmethionine is present on Met-1. The segment at 1-29 (METPGQKRATRSTHTPLSPTRITRLQEKE) is head. Ser-18 bears the Phosphoserine mark. The IF rod domain occupies 27 to 383 (EKEDLQGLND…KLLEGEEERL (357 aa)). Positions 30 to 66 (DLQGLNDRLAVYIDKVRSLELENARLRLRITESEDVI) are coil 1A. The tract at residues 67-76 (SREVTGIKSA) is linker 1. The coil 1B stretch occupies residues 77 to 214 (YETELADARK…SIYNEEMRET (138 aa)). Residues 215-238 (KRRHETRLVEVDNGRQREFESKLA) are linker 2. The tract at residues 239–383 (DALHELRAQH…KLLEGEEERL (145 aa)) is coil 2. Disordered stretches follow at residues 381 to 441 (ERLR…SVEE), 550 to 581 (DDEDNDDMEHHHHHHHHHHDGQNSSGDPGEYN), and 602 to 641 (ASQGSGLVTGSSGSSSSSVTLTRTYRSTGGTSGGSGLGES). The tract at residues 384–664 (RLSPSPNTQK…AQVAPQNCSI (281 aa)) is tail. Ser-388 bears the Phosphoserine mark. The segment covering 399 to 411 (IASHSGAHISSSA) has biased composition (low complexity). The short motif at 413–418 (KRRRLE) is the Nuclear localization signal element. An LTD domain is found at 425–542 (SSFTQHARTT…EEVAMRKLVR (118 aa)). A compositionally biased stretch (polar residues) spans 427-436 (FTQHARTTGK). The segment covering 605–630 (GSGLVTGSSGSSSSSVTLTRTYRSTG) has biased composition (low complexity). A Cysteine methyl ester modification is found at Cys-662. Cys-662 carries S-farnesyl cysteine lipidation. Positions 663–665 (SIM) are cleaved as a propeptide — removed in mature form.

It belongs to the intermediate filament family. Homodimer. Lamin dimers then assemble into dimeric head-to-tail polymers. Ultimately, two head-to-tail polymers assemble laterally into a protofilament with a uniformly shaped rod of 3.5 nm in diameter. Phosphorylation plays a key role in lamin organization, subcellular localization and nuclear envelope disintegration. Phosphorylation by CDK1 at Ser-18 at the onset of mitosis drives lamin disassembly and nuclear envelope breakdown.

The protein localises to the nucleus lamina. The protein resides in the nucleus envelope. It localises to the nucleus. It is found in the nucleoplasm. Its subcellular location is the nucleus matrix. Lamins are intermediate filament proteins that assemble into a filamentous meshwork, and which constitute the major components of the nuclear lamina, a fibrous layer on the nucleoplasmic side of the inner nuclear membrane. Lamins provide a framework for the nuclear envelope, bridging the nuclear envelope and chromatin, thereby playing an important role in nuclear assembly, chromatin organization, nuclear membrane and telomere dynamics. The structural integrity of the lamina is strictly controlled by the cell cycle, as seen by the disintegration and formation of the nuclear envelope in prophase and telophase, respectively. The polypeptide is Lamin-A (lmna) (Xenopus laevis (African clawed frog)).